The following is a 1150-amino-acid chain: Cell division cycle and apoptosis regulator protein 1 (1150 aa).

An interaction with AR region spans residues 1 to 249; sequence MAQFGGQKNP…TQPQPQSLLQ (249 aa). Disordered stretches follow at residues 124-146 and 285-354; these read PTAQ…QPQK and IVSQ…SPRR. Residues 134 to 146 show a composition bias toward low complexity; that stretch reads TPRSSQQQTQPQK. Residues 203–660 are interaction with GATA2; that stretch reads QRIQTLPNQN…RALSSKGLKS (458 aa). Composition is skewed to basic and acidic residues over residues 293–334 and 341–352; these read RRLD…ERSP and ERSPRRERERSP. S456 carries the post-translational modification Phosphoserine. The stretch at 594 to 618 forms a coiled coil; sequence KQQLVEKLQGERKEADGEQDEEEKD. Residues 600–638 form a disordered region; the sequence is KLQGERKEADGEQDEEEKDDGEAKEISTPTHWSKLDPKT. The segment covering 610–621 has biased composition (acidic residues); sequence GEQDEEEKDDGE. Position 627 is a phosphothreonine (T627). One can recognise an SAP domain in the interval 636–670; the sequence is PKTMKVNDLRKELESRALSSKGLKSQLIARLTKQL. K637 is covalently cross-linked (Glycyl lysine isopeptide (Lys-Gly) (interchain with G-Cter in ubiquitin)). The interaction with GATA1 stretch occupies residues 643–1150; it reads DLRKELESRA…QKSKENGASV (508 aa). Phosphothreonine is present on T667. Composition is skewed to basic and acidic residues over residues 673–687, 694–713, 796–817, and 832–855; these read EEQK…KSEK, DRKS…EEIE, KEDK…KKEE, and SGDD…KDDS. 2 disordered regions span residues 673–713 and 796–915; these read EEQK…EEIE and KEDK…EKEK. S685 and S697 each carry phosphoserine. Residues 856–889 are compositionally biased toward acidic residues; the sequence is KDDDETEEDNNQDEYDPMEAEEAEDEEDDRDEEE. T861 carries the phosphothreonine modification. The segment covering 890–915 has biased composition (basic and acidic residues); it reads MTKRDDKRDINRYCKERPSKDKEKEK. Residue K1012 forms a Glycyl lysine isopeptide (Lys-Gly) (interchain with G-Cter in SUMO1); alternate linkage. K1012 participates in a covalent cross-link: Glycyl lysine isopeptide (Lys-Gly) (interchain with G-Cter in SUMO2); alternate. Residues 1033-1114 adopt a coiled-coil conformation; the sequence is DVGSLLQKLE…LQFENQMNKT (82 aa). Residues K1067 and K1135 each participate in a glycyl lysine isopeptide (Lys-Gly) (interchain with G-Cter in SUMO2) cross-link.

In terms of assembly, directly interacts with ESR1, NR3C1 and p53/TP53. Interacts (via N-terminus) with CALCOCO1. Interacts with MED1. Interacts with GATA1. Interacts with AR and GATA2. As to expression, expressed in various epithelial cancer cell lines, including breast, colon, prostate, pancreatic and leukemia. Expression is regulated by growth factors.

It localises to the cytoplasm. The protein localises to the perinuclear region. Its function is as follows. Associates with components of the Mediator and p160 coactivator complexes that play a role as intermediaries transducing regulatory signals from upstream transcriptional activator proteins to basal transcription machinery at the core promoter. Recruited to endogenous nuclear receptor target genes in response to the appropriate hormone. Also functions as a p53 coactivator. May thus play an important role in transcriptional regulation. May be involved in apoptosis signaling in the presence of the reinoid CD437. Apoptosis induction involves sequestration of 14-3-3 protein(s) and mediated altered expression of multiple cell cycle regulatory genes including MYC, CCNB1 and CDKN1A. Plays a role in cell cycle progression and/or cell proliferation. In association with CALCOCO1 enhances GATA1- and MED1-mediated transcriptional activation from the gamma-globin promoter during erythroid differentiation of K562 erythroleukemia cells. Can act as a both a coactivator and corepressor of AR-mediated transcription. Contributes to chromatin looping and AR transcription complex assembly by stabilizing AR-GATA2 association on chromatin and facilitating MED1 and RNA polymerase II recruitment to AR-binding sites. May play an important role in the growth and tumorigenesis of prostate cancer cells. The protein is Cell division cycle and apoptosis regulator protein 1 (CCAR1) of Homo sapiens (Human).